Here is a 344-residue protein sequence, read N- to C-terminus: Anthranilate phosphoribosyltransferase (344 aa).

Residues glycine 84, 87-88 (GD), threonine 92, 94-97 (NIST), 112-120 (KHGNRSVSS), and serine 124 each bind 5-phospho-alpha-D-ribose 1-diphosphate. An anthranilate-binding site is contributed by glycine 84. Serine 96 provides a ligand contact to Mg(2+). Asparagine 115 is an anthranilate binding site. Residue arginine 170 coordinates anthranilate. The Mg(2+) site is built by aspartate 229 and glutamate 230.

Belongs to the anthranilate phosphoribosyltransferase family. In terms of assembly, homodimer. The cofactor is Mg(2+).

The catalysed reaction is N-(5-phospho-beta-D-ribosyl)anthranilate + diphosphate = 5-phospho-alpha-D-ribose 1-diphosphate + anthranilate. It participates in amino-acid biosynthesis; L-tryptophan biosynthesis; L-tryptophan from chorismate: step 2/5. In terms of biological role, catalyzes the transfer of the phosphoribosyl group of 5-phosphorylribose-1-pyrophosphate (PRPP) to anthranilate to yield N-(5'-phosphoribosyl)-anthranilate (PRA). The sequence is that of Anthranilate phosphoribosyltransferase from Xylella fastidiosa (strain 9a5c).